A 438-amino-acid chain; its full sequence is CBL-interacting protein kinase 32 (438 aa).

The 256-residue stretch at 13 to 268 (YELGRTIGEG…IPEILEDEWF (256 aa)) folds into the Protein kinase domain. Residues 19–27 (IGEGTFAKV) and lysine 42 each bind ATP. The active-site Proton acceptor is the aspartate 136. Positions 154-183 (DFGLSALSQQIKDDGLLHTTCGTPNYVAPE) are activation loop. The NAF domain occupies 305-329 (EEPEALNAFELISMSAGLNLGNLFD). Positions 335–364 (KRETRFTSKCPPKEIVRKIEEAAKPLGFDV) are PPI.

It belongs to the protein kinase superfamily. CAMK Ser/Thr protein kinase family. SNF1 subfamily. It depends on Mn(2+) as a cofactor.

The enzyme catalyses L-seryl-[protein] + ATP = O-phospho-L-seryl-[protein] + ADP + H(+). It carries out the reaction L-threonyl-[protein] + ATP = O-phospho-L-threonyl-[protein] + ADP + H(+). CIPK serine-threonine protein kinases interact with CBL proteins. Binding of a CBL protein to the regulatory NAF domain of CIPK protein lead to the activation of the kinase in a calcium-dependent manner. The protein is CBL-interacting protein kinase 32 (CIPK32) of Oryza sativa subsp. japonica (Rice).